The chain runs to 20 residues: Cytochrome c oxidase subunit 6A1, mitochondrial (20 aa).

Belongs to the cytochrome c oxidase subunit 6A family. As to quaternary structure, component of the cytochrome c oxidase (complex IV, CIV), a multisubunit enzyme composed of 14 subunits. The complex is composed of a catalytic core of 3 subunits MT-CO1, MT-CO2 and MT-CO3, encoded in the mitochondrial DNA, and 11 supernumerary subunits COX4I, COX5A, COX5B, COX6A, COX6B, COX6C, COX7A, COX7B, COX7C, COX8 and NDUFA4, which are encoded in the nuclear genome. The complex exists as a monomer or a dimer and forms supercomplexes (SCs) in the inner mitochondrial membrane with NADH-ubiquinone oxidoreductase (complex I, CI) and ubiquinol-cytochrome c oxidoreductase (cytochrome b-c1 complex, complex III, CIII), resulting in different assemblies (supercomplex SCI(1)III(2)IV(1) and megacomplex MCI(2)III(2)IV(2)). In terms of tissue distribution, liver specific isoform.

Its subcellular location is the mitochondrion inner membrane. Its pathway is energy metabolism; oxidative phosphorylation. In terms of biological role, component of the cytochrome c oxidase, the last enzyme in the mitochondrial electron transport chain which drives oxidative phosphorylation. The respiratory chain contains 3 multisubunit complexes succinate dehydrogenase (complex II, CII), ubiquinol-cytochrome c oxidoreductase (cytochrome b-c1 complex, complex III, CIII) and cytochrome c oxidase (complex IV, CIV), that cooperate to transfer electrons derived from NADH and succinate to molecular oxygen, creating an electrochemical gradient over the inner membrane that drives transmembrane transport and the ATP synthase. Cytochrome c oxidase is the component of the respiratory chain that catalyzes the reduction of oxygen to water. Electrons originating from reduced cytochrome c in the intermembrane space (IMS) are transferred via the dinuclear copper A center (CU(A)) of subunit 2 and heme A of subunit 1 to the active site in subunit 1, a binuclear center (BNC) formed by heme A3 and copper B (CU(B)). The BNC reduces molecular oxygen to 2 water molecules unsing 4 electrons from cytochrome c in the IMS and 4 protons from the mitochondrial matrix. The sequence is that of Cytochrome c oxidase subunit 6A1, mitochondrial (COX6A1) from Canis lupus familiaris (Dog).